Reading from the N-terminus, the 138-residue chain is Augmin complex subunit msd1 (138 aa).

In terms of assembly, component of the augmin complex composed of dgt2, dgt3, dgt4, dgt5, dgt6, msd1, msd5 and wac. The complex interacts directly or indirectly with microtubules and is required for centrosome-independent generation of spindle microtubules.

It localises to the cytoplasm. Its subcellular location is the cytoskeleton. The protein localises to the spindle. In terms of biological role, as part of the augmin complex, plays a role in centrosome-independent generation of spindle microtubules. The complex is required for mitotic spindle assembly through its involvement in localizing gamma-tubulin to spindle microtubules. msd1 is required for microtubule nucleation from within the mitotic spindle and for localization of Grip71 to centrosomes and mitotic spindle. The protein is Augmin complex subunit msd1 of Drosophila melanogaster (Fruit fly).